The primary structure comprises 178 residues: Adenine phosphoribosyltransferase (178 aa).

This sequence belongs to the purine/pyrimidine phosphoribosyltransferase family. In terms of assembly, homodimer.

The protein resides in the cytoplasm. It carries out the reaction AMP + diphosphate = 5-phospho-alpha-D-ribose 1-diphosphate + adenine. It participates in purine metabolism; AMP biosynthesis via salvage pathway; AMP from adenine: step 1/1. In terms of biological role, catalyzes a salvage reaction resulting in the formation of AMP, that is energically less costly than de novo synthesis. In Erythrobacter litoralis (strain HTCC2594), this protein is Adenine phosphoribosyltransferase.